The chain runs to 567 residues: Proline--tRNA ligase (567 aa).

It belongs to the class-II aminoacyl-tRNA synthetase family. ProS type 1 subfamily. In terms of assembly, homodimer.

It is found in the cytoplasm. It catalyses the reaction tRNA(Pro) + L-proline + ATP = L-prolyl-tRNA(Pro) + AMP + diphosphate. Catalyzes the attachment of proline to tRNA(Pro) in a two-step reaction: proline is first activated by ATP to form Pro-AMP and then transferred to the acceptor end of tRNA(Pro). As ProRS can inadvertently accommodate and process non-cognate amino acids such as alanine and cysteine, to avoid such errors it has two additional distinct editing activities against alanine. One activity is designated as 'pretransfer' editing and involves the tRNA(Pro)-independent hydrolysis of activated Ala-AMP. The other activity is designated 'posttransfer' editing and involves deacylation of mischarged Ala-tRNA(Pro). The misacylated Cys-tRNA(Pro) is not edited by ProRS. The chain is Proline--tRNA ligase from Staphylococcus aureus (strain USA300).